The following is a 508-amino-acid chain: ATP synthase subunit alpha, chloroplastic (508 aa).

ATP is bound at residue 170–177; that stretch reads GDRQTGKT.

The protein belongs to the ATPase alpha/beta chains family. As to quaternary structure, F-type ATPases have 2 components, F(1) - the catalytic core - and F(0) - the membrane proton channel. F(1) has five subunits: alpha(3), beta(3), gamma(1), delta(1), epsilon(1). F(0) has four main subunits: a(1), b(1), b'(1) and c(10-14). The alpha and beta chains form an alternating ring which encloses part of the gamma chain. F(1) is attached to F(0) by a central stalk formed by the gamma and epsilon chains, while a peripheral stalk is formed by the delta, b and b' chains.

Its subcellular location is the plastid. The protein resides in the chloroplast thylakoid membrane. The enzyme catalyses ATP + H2O + 4 H(+)(in) = ADP + phosphate + 5 H(+)(out). F(1)F(0) ATP synthase produces ATP from ADP in the presence of a proton or sodium gradient. F-type ATPases consist of two structural domains, F(1) containing the extramembraneous catalytic core and F(0) containing the membrane proton channel, linked together by a central stalk and a peripheral stalk. During catalysis, ATP synthesis in the catalytic domain of F(1) is coupled via a rotary mechanism of the central stalk subunits to proton translocation. Functionally, the alpha chain is a regulatory subunit. The polypeptide is ATP synthase subunit alpha, chloroplastic (Chlamydomonas reinhardtii (Chlamydomonas smithii)).